The following is a 910-amino-acid chain: MEEEDEEILSSSDCDDSSDSYKDDSQDSEGENDNPECEDLAVVSLSSDADRKSKNVKDLLRGNLVVQRQPLLPRVLSVSDGAAVCRKPFKPPCSHGYDSTGQLSRRLSARKRFVPWGSSTPVVVALPTKLEASTNIERDEEEEVVCLPPDIEPLVLWQSEEDGMSNVTTIMVHSVLVKFLRPHQREGVQFMFDCVSGLHGSANINGCILADDMGLGKTLQSITLLYTLLCQGFDGTPMVKKAIIVTPTSLVSNWEAEIKKWVGDRIQLIALCESTRDDVLSGIDSFTRPRSALQVLIISYETFRMHSSKFCQSESCDLLICDEAHRLKNDQTLTNRALASLTCKRRVLLSGTPMQNDLEEFFAMVNFTNPGSLGDAAHFRHYYEAPIICGREPTATEEEKNLAADRSAELSSKVNQFILRRTNALLSNHLPPKIIEVVCCKMTTLQSTLYNHFISSKNLKRALADNAKQTKVLAYITALKKLCNHPKLIYDTIKSGNPGTVGFENCLEFFPAEMFSGRSGAWTGGDGAWVELSGKMHVLSRLLANLRRKTDDRIVLVSNYTQTLDLFAQLCRERRYPFLRLDGSTTISKRQKLVNRLNDPTKDEFAFLLSSKAGGCGLNLIGANRLVLFDPDWNPANDKQAAARVWRDGQKKRVYVYRFLSTGTIEEKVYQRQMSKEGLQKVIQHEQTDNSTRQGNLLSTEDLRDLFSFHGDVRSEIHEKMSCSRCQNDASGTENIEEGNENNVDDNACQIDQEDIGGFAKDAGCFNLLKNSERQVGTPLEEDLGSWGHHFTSKSVPDAILQASAGDEVTFVFTNQVDGKLVPIESNVSPKTVESEEHNRNQPVNKRAFNKPQQRPREPLQPLSLNETTKRVKLSTYKRLHGNSNIDDAQIKMSLQRPNLVSVNHDDDFV.

Composition is skewed to acidic residues over residues 1 to 18 (MEEE…DDSS) and 26 to 39 (QDSE…ECED). Residues 1–39 (MEEEDEEILSSSDCDDSSDSYKDDSQDSEGENDNPECED) form a disordered region. In terms of domain architecture, Helicase ATP-binding spans 198–371 (LHGSANINGC…FAMVNFTNPG (174 aa)). 211–218 (DDMGLGKT) contacts ATP. Residues 322-325 (DEAH) carry the DEAH box motif. Residues 396-417 (TEEEKNLAADRSAELSSKVNQF) are a coiled coil. Positions 538–696 (VLSRLLANLR…QTDNSTRQGN (159 aa)) constitute a Helicase C-terminal domain. Residues 828-861 (VSPKTVESEEHNRNQPVNKRAFNKPQQRPREPLQ) are disordered.

It belongs to the SNF2/RAD54 helicase family. In terms of assembly, interacts with RAD51. Binds to the geminivirus mungbean yellow mosaic virus (MYMV) and to the tomato leaf curl virus (ToLCV) replication-associated proteins. Expressed ubiquitously, with the highest levels of expression in flower buds. Present in flower buds (at protein level).

The protein localises to the nucleus. In terms of biological role, dissociates RAD51 from nucleoprotein filaments formed on dsDNA. Could be involved in the turnover of RAD51 protein-dsDNA filaments. Addition of RAD54 overcomes inhibition of DNA strand exchange by RAD51 bound to substrate dsDNA. Species preference in the RAD51 dissociation and DNA strand exchange assays underlines the importance of specific RAD54-RAD51 interactions. RAD51 is unable to release dsDNA upon ATP hydrolysis, leaving it stuck on the heteroduplex DNA product after DNA strand exchange. Involved in DNA repair and mitotic recombination. Functions in the homologous recombinational DNA repair (RAD52) pathway. Required for synthesis-dependent strand annealing (SDSA) during double-strand break repair. Its function is as follows. Facilitates geminiviral replication (e.g. geminivirus mungbean yellow mosaic virus (MYMV) and tomato leaf curl virus (ToLCV)). The protein is Protein CHROMATIN REMODELING 25 (CHR25) of Arabidopsis thaliana (Mouse-ear cress).